A 444-amino-acid polypeptide reads, in one-letter code: Chitinase-like protein Idgf4 (444 aa).

The signal sequence occupies residues 1-22 (MKLLLILLGALLAVLTIKRTSA). In terms of domain architecture, GH18 spans 27–444 (NHLICYYDGT…ILRAIKFKFQ (418 aa)). Cys31 and Cys58 form a disulfide bridge. Asn226 is a glycosylation site (N-linked (GlcNAc...) asparagine). Cys345 and Cys428 are disulfide-bonded.

It belongs to the glycosyl hydrolase 18 family. IDGF subfamily. In terms of processing, glycosylated.

It localises to the secreted. Its function is as follows. Cooperates with insulin-like peptides to stimulate the proliferation, polarization and motility of imaginal disk cells. May act by stabilizing the binding of insulin-like peptides to its receptor through a simultaneous interaction with both molecules to form a multiprotein signaling complex. The protein is Chitinase-like protein Idgf4 (Idgf4) of Glossina morsitans morsitans (Savannah tsetse fly).